A 544-amino-acid polypeptide reads, in one-letter code: Chaperonin GroEL 1 (544 aa).

Residues 29 to 32, 86 to 90, G413, 479 to 481, and D495 each bind ATP; these read TLGP, DGTTT, and NAA.

Belongs to the chaperonin (HSP60) family. Forms a cylinder of 14 subunits composed of two heptameric rings stacked back-to-back. Interacts with the co-chaperonin GroES.

Its subcellular location is the cytoplasm. The catalysed reaction is ATP + H2O + a folded polypeptide = ADP + phosphate + an unfolded polypeptide.. Together with its co-chaperonin GroES, plays an essential role in assisting protein folding. The GroEL-GroES system forms a nano-cage that allows encapsulation of the non-native substrate proteins and provides a physical environment optimized to promote and accelerate protein folding. The polypeptide is Chaperonin GroEL 1 (Parasynechococcus marenigrum (strain WH8102)).